The sequence spans 82 residues: RNA-binding protein TTE2299 (82 aa).

The protein belongs to the eukaryotic ribosomal protein eL8 family.

The protein is RNA-binding protein TTE2299 of Caldanaerobacter subterraneus subsp. tengcongensis (strain DSM 15242 / JCM 11007 / NBRC 100824 / MB4) (Thermoanaerobacter tengcongensis).